A 671-amino-acid chain; its full sequence is MSELEEDFAKILMLKEERIKELEKRLSEKEEEIQELKRKLHKCQSVLPVPSTHIGPRTTRAQGISAEPQTYRSFHDLRQAFRKFTKFERSKDLIKEAILDNDFMKNLELSQIQEIVDCMYPVEYGKDSCIIKEGDVGSLAYVMEDGKVEVTKEGVKLCTMGPGKVFGELAILYNCTRTATVKTLVNVKLWAIDRQCFQTIMMRTGLIKHTEYMEFLKSVPTFQSLPEEILSKLADVLEETHYENEEYSIRQGARGDTFFIISKGKVNVTREDSPSEDPIFLRTLGKGDWFGEKALQGEDVRTANVIAAEAVTCLVIDRDSFKHLIGGLDDVSNKAYEDAEAKAKYEAEAAFFANLKLSDFNIIDTLGVGGFGRVELVQLKSEESKTFAMKILKKRHIVDTRQQEHIRSEKQIMQGAHSDFIVRLYRTFKDSKYLYMLMEACLGGELWTILRDRGSFEDSTTRFYTACVVEAFAYLHSKGIIYRDLKPENLILDHRGYAKLVDFGFAKKIGFGKKTWTFCGTPEYVAPEIILNKGHDISADYWSLGILMYELLTGSPPFSGPDPMKTYNIILRGIDMIEFPKKIAKNAANLIKKLCRDNPSERLGNLKNGVKDIQKHKWFEGFNWEGLRKGTLTPPIIPSVASPTDTSNFDGFPEDNDEPPPDDNSGWDIDF.

Ser2 is modified (N-acetylserine). A coiled-coil region spans residues 2 to 59; the sequence is SELEEDFAKILMLKEERIKELEKRLSEKEEEIQELKRKLHKCQSVLPVPSTHIGPRTT. The segment at 2-102 is required for dimerization; that stretch reads SELEEDFAKI…LIKEAILDND (101 aa). A leucine-zipper region spans residues 9–44; it reads AKILMLKEERIKELEKRLSEKEEEIQELKRKLHKCQ. Residues 50–75 form an autoinhibitory domain region; the sequence is PSTHIGPRTTRAQGISAEPQTYRSFH. Thr59 carries the phosphothreonine; by autocatalysis modification. The tract at residues 103-220 is cGMP-binding, high affinity; that stretch reads FMKNLELSQI…EYMEFLKSVP (118 aa). 3',5'-cyclic GMP-binding positions include 167–170, 177–178, Arg282, 291–294, 301–302, and Tyr336; these read GELA, RT, and GEKA. The tract at residues 221 to 341 is cGMP-binding, low affinity; the sequence is TFQSLPEEIL…SNKAYEDAEA (121 aa). The Protein kinase domain maps to 360-619; sequence FNIIDTLGVG…VKDIQKHKWF (260 aa). ATP is bound by residues 366–374 and Lys390; that span reads LGVGGFGRV. Asp484 serves as the catalytic Proton acceptor. Thr515 carries the post-translational modification Phosphothreonine. Residues 620-671 enclose the AGC-kinase C-terminal domain; that stretch reads EGFNWEGLRKGTLTPPIIPSVASPTDTSNFDGFPEDNDEPPPDDNSGWDIDF. The segment at 635 to 671 is disordered; that stretch reads PIIPSVASPTDTSNFDGFPEDNDEPPPDDNSGWDIDF. Residues 652 to 661 are compositionally biased toward acidic residues; it reads FPEDNDEPPP.

The protein belongs to the protein kinase superfamily. AGC Ser/Thr protein kinase family. cGMP subfamily. Isoform alpha: parallel homodimer or heterodimer and also heterotetramer. Interacts directly with PPP1R12A. Non-covalent dimer of dimer of PRKG1-PRKG1 and PPP1R12A-PPP1R12A. This interaction targets PRKG1 to stress fibers to mediate smooth muscle cell relaxation and vasodilation in responses to rises in cGMP. Isoform beta: antiparallel homodimer. Part of cGMP kinase signaling complex at least composed of ACTA2/alpha-actin, CNN1/calponin H1, PLN/phospholamban, PRKG1 and ITPR1. Interacts with IRAG1. Forms a stable complex with ITPR1, IRAG1, and isoform beta of PRKG1. Interacts with TRPC7 (via ankyrin repeat domain). Isoform alpha interacts with RGS2. Interacts with GTF2I. Autophosphorylation increases kinase activity. Post-translationally, 65 kDa monomer is produced by proteolytic cleavage.

The protein resides in the cytoplasm. The enzyme catalyses L-seryl-[protein] + ATP = O-phospho-L-seryl-[protein] + ADP + H(+). It carries out the reaction L-threonyl-[protein] + ATP = O-phospho-L-threonyl-[protein] + ADP + H(+). With respect to regulation, in the absence of cGMP, PRKG1 activity is suppressed by autoinhibitory contacts. Its function is as follows. Serine/threonine protein kinase that acts as a key mediator of the nitric oxide (NO)/cGMP signaling pathway. GMP binding activates PRKG1, which phosphorylates serines and threonines on many cellular proteins. Numerous protein targets for PRKG1 phosphorylation are implicated in modulating cellular calcium, but the contribution of each of these targets may vary substantially among cell types. Proteins that are phosphorylated by PRKG1 regulate platelet activation and adhesion, smooth muscle contraction, cardiac function, gene expression, feedback of the NO-signaling pathway, and other processes involved in several aspects of the CNS like axon guidance, hippocampal and cerebellar learning, circadian rhythm and nociception. Smooth muscle relaxation is mediated through lowering of intracellular free calcium, by desensitization of contractile proteins to calcium, and by decrease in the contractile state of smooth muscle or in platelet activation. Regulates intracellular calcium levels via several pathways: phosphorylates IRAG1 and inhibits IP3-induced Ca(2+) release from intracellular stores, phosphorylation of KCNMA1 (BKCa) channels decreases intracellular Ca(2+) levels, which leads to increased opening of this channel. PRKG1 phosphorylates the canonical transient receptor potential channel (TRPC) family which inactivates the associated inward calcium current. Another mode of action of NO/cGMP/PKGI signaling involves PKGI-mediated inactivation of the Ras homolog gene family member A (RhoA). Phosphorylation of RHOA by PRKG1 blocks the action of this protein in myriad processes: regulation of RHOA translocation; decreasing contraction; controlling vesicle trafficking, reduction of myosin light chain phosphorylation resulting in vasorelaxation. Activation of PRKG1 by NO signaling also alters gene expression in a number of tissues. In smooth muscle cells, increased cGMP and PRKG1 activity influence expression of smooth muscle-specific contractile proteins, levels of proteins in the NO/cGMP signaling pathway, down-regulation of the matrix proteins osteopontin and thrombospondin-1 to limit smooth muscle cell migration and phenotype. Regulates vasodilator-stimulated phosphoprotein (VASP) functions in platelets and smooth muscle. The sequence is that of cGMP-dependent protein kinase 1 (PRKG1) from Oryctolagus cuniculus (Rabbit).